We begin with the raw amino-acid sequence, 145 residues long: Basic phospholipase A2 GL1-1 (145 aa).

A signal peptide spans 1–21 (MYPAHLLVLLAVCVSLLGASA). The propeptide occupies 22-27 (IPPLPL). 7 cysteine pairs are disulfide-bonded: Cys-38–Cys-98, Cys-54–Cys-144, Cys-56–Cys-72, Cys-71–Cys-125, Cys-78–Cys-118, Cys-87–Cys-111, and Cys-105–Cys-116. Ca(2+) contacts are provided by Tyr-55, Gly-57, and Gly-59. The active site involves His-75. Asp-76 contributes to the Ca(2+) binding site. Asp-119 is an active-site residue.

The protein belongs to the phospholipase A2 family. Group I subfamily. D49 sub-subfamily. The cofactor is Ca(2+). As to expression, expressed by the venom gland.

It is found in the secreted. The catalysed reaction is a 1,2-diacyl-sn-glycero-3-phosphocholine + H2O = a 1-acyl-sn-glycero-3-phosphocholine + a fatty acid + H(+). Functionally, PLA2 catalyzes the calcium-dependent hydrolysis of the 2-acyl groups in 3-sn-phosphoglycerides. This Laticauda semifasciata (Black-banded sea krait) protein is Basic phospholipase A2 GL1-1.